A 484-amino-acid chain; its full sequence is Coronin-1B (484 aa).

A Phosphoserine modification is found at serine 2. 5 WD repeats span residues 80 to 120 (GHTG…LTSP), 130 to 170 (GHTK…ELYR), 174 to 213 (LHPD…LVAE), 217 to 260 (AHEG…EPMA), and 265 to 305 (DSSN…PYIH). The disordered stretch occupies residues 404–446 (LKVSRRNVLSDSRPASYSRSGASTATAVTDVPSGNLAGAGEAG). Residues 410 to 430 (NVLSDSRPASYSRSGASTATA) are compositionally biased toward polar residues. Residues 444-482 (EAGKLEEVMQELRALRMLVKEQGERISRLEEQLGRMENG) adopt a coiled-coil conformation.

The protein belongs to the WD repeat coronin family. In terms of assembly, forms homooligomers, but does not form complexes with the other coronins. Interacts with Arp2/3 complex components, including ACTR2, ARPC1B and ARPC2. Binds actin. Phosphorylation on Ser-2 regulates the interaction with the Arp2/3 complex and cell motility in fibroblasts. Phosphorylation does not seem to affect subcellular location. Ubiquitous.

Its subcellular location is the cytoplasm. It localises to the cytoskeleton. The protein localises to the stress fiber. Functionally, regulates leading edge dynamics and cell motility in fibroblasts. May be involved in cytokinesis and signal transduction. The polypeptide is Coronin-1B (Coro1b) (Mus musculus (Mouse)).